The chain runs to 198 residues: Pyridoxal 5'-phosphate synthase subunit PdxT (198 aa).

49-51 is a binding site for L-glutamine; the sequence is GES. The Nucleophile role is filled by C81. Residues R113 and 141-142 contribute to the L-glutamine site; that span reads IR. Catalysis depends on charge relay system residues H177 and E179.

Belongs to the glutaminase PdxT/SNO family. In the presence of PdxS, forms a dodecamer of heterodimers. Only shows activity in the heterodimer.

It carries out the reaction aldehydo-D-ribose 5-phosphate + D-glyceraldehyde 3-phosphate + L-glutamine = pyridoxal 5'-phosphate + L-glutamate + phosphate + 3 H2O + H(+). The catalysed reaction is L-glutamine + H2O = L-glutamate + NH4(+). Its pathway is cofactor biosynthesis; pyridoxal 5'-phosphate biosynthesis. In terms of biological role, catalyzes the hydrolysis of glutamine to glutamate and ammonia as part of the biosynthesis of pyridoxal 5'-phosphate. The resulting ammonia molecule is channeled to the active site of PdxS. The chain is Pyridoxal 5'-phosphate synthase subunit PdxT from Mycobacterium ulcerans (strain Agy99).